The sequence spans 168 residues: Competence protein B (168 aa).

Involved in transformation (genetic competence for DNA uptake). The chain is Competence protein B (comB) from Haemophilus influenzae (strain ATCC 51907 / DSM 11121 / KW20 / Rd).